A 60-amino-acid polypeptide reads, in one-letter code: Large ribosomal subunit protein uL30 (60 aa).

It belongs to the universal ribosomal protein uL30 family. As to quaternary structure, part of the 50S ribosomal subunit.

The chain is Large ribosomal subunit protein uL30 from Dehalococcoides mccartyi (strain CBDB1).